Reading from the N-terminus, the 439-residue chain is GTPase Der (439 aa).

EngA-type G domains are found at residues 4–166 (PIVA…PAQD) and 175–350 (IRIA…EEAS). GTP is bound by residues 10 to 17 (GRPNVGKS), 57 to 61 (DTGGL), 119 to 122 (NKVE), 181 to 188 (GRPNVGKS), 228 to 232 (DTAGM), and 293 to 296 (NKWD). The region spanning 351–435 (KRVATADLNN…PIRFFLRKRE (85 aa)) is the KH-like domain.

It belongs to the TRAFAC class TrmE-Era-EngA-EngB-Septin-like GTPase superfamily. EngA (Der) GTPase family. In terms of assembly, associates with the 50S ribosomal subunit.

Its function is as follows. GTPase that plays an essential role in the late steps of ribosome biogenesis. This Desulforamulus reducens (strain ATCC BAA-1160 / DSM 100696 / MI-1) (Desulfotomaculum reducens) protein is GTPase Der.